Here is a 247-residue protein sequence, read N- to C-terminus: Carboxy-S-adenosyl-L-methionine synthase (247 aa).

Residues Tyr-39, 64–66, 89–90, 117–118, Asn-132, and Arg-199 each bind S-adenosyl-L-methionine; these read GCS, DN, and DI.

The protein belongs to the class I-like SAM-binding methyltransferase superfamily. Cx-SAM synthase family. Homodimer.

It carries out the reaction prephenate + S-adenosyl-L-methionine = carboxy-S-adenosyl-L-methionine + 3-phenylpyruvate + H2O. In terms of biological role, catalyzes the conversion of S-adenosyl-L-methionine (SAM) to carboxy-S-adenosyl-L-methionine (Cx-SAM). In Escherichia coli O17:K52:H18 (strain UMN026 / ExPEC), this protein is Carboxy-S-adenosyl-L-methionine synthase.